A 185-amino-acid chain; its full sequence is Orotate phosphoribosyltransferase (185 aa).

5-phospho-alpha-D-ribose 1-diphosphate contacts are provided by residues Arg98, Lys99, Lys102, His104, and 128 to 136 (EDVTTTGGS). Residues Thr132 and Arg160 each coordinate orotate.

This sequence belongs to the purine/pyrimidine phosphoribosyltransferase family. PyrE subfamily. Homodimer. Mg(2+) is required as a cofactor.

It catalyses the reaction orotidine 5'-phosphate + diphosphate = orotate + 5-phospho-alpha-D-ribose 1-diphosphate. It functions in the pathway pyrimidine metabolism; UMP biosynthesis via de novo pathway; UMP from orotate: step 1/2. Functionally, catalyzes the transfer of a ribosyl phosphate group from 5-phosphoribose 1-diphosphate to orotate, leading to the formation of orotidine monophosphate (OMP). This is Orotate phosphoribosyltransferase from Bradyrhizobium sp. (strain ORS 278).